The sequence spans 129 residues: Lysozyme C (129 aa).

One can recognise a C-type lysozyme domain in the interval 1–129 (KVYGRCELAA…VQAWIRGCRL (129 aa)). Cystine bridges form between Cys6–Cys127, Cys30–Cys115, Cys64–Cys80, and Cys76–Cys94. Catalysis depends on residues Glu35 and Asp52.

It belongs to the glycosyl hydrolase 22 family. In terms of assembly, monomer.

The protein resides in the secreted. The catalysed reaction is Hydrolysis of (1-&gt;4)-beta-linkages between N-acetylmuramic acid and N-acetyl-D-glucosamine residues in a peptidoglycan and between N-acetyl-D-glucosamine residues in chitodextrins.. Functionally, lysozymes have primarily a bacteriolytic function; those in tissues and body fluids are associated with the monocyte-macrophage system and enhance the activity of immunoagents. This Tragopan satyra (Satyr tragopan) protein is Lysozyme C (LYZ).